The chain runs to 181 residues: MSEAPKKRWYVVQAFSGFEGRVAQSLREHIKLHDMEELFGEVMVPTEEVVEIRGGQRRKSERKFFPGYVLVQMVMNDASWHLVRSVPRVMGFIGGTSDRPAPISDKEVDAIMNRLQQVGDKPRPKTLFEPGELVRVSDGPFADFNGVVEEVDYEKSRLKVSVSIFGRATPVELDFSQVEKG.

The region spanning 130-161 is the KOW domain; sequence PGELVRVSDGPFADFNGVVEEVDYEKSRLKVS.

Belongs to the NusG family. In terms of assembly, monomer. Interacts with the transcription termination factor Rho and with RNA polymerase.

Its function is as follows. Participates in transcription elongation, termination and antitermination. In the absence of Rho, increases the rate of transcription elongation by the RNA polymerase (RNAP), probably by partially suppressing pausing. In the presence of Rho, modulates most Rho-dependent termination events by interacting with the RNAP to render the complex more susceptible to the termination activity of Rho. May be required to overcome a kinetic limitation of Rho to function at certain terminators. Also involved in ribosomal RNA transcriptional antitermination. This is Transcription termination/antitermination protein NusG from Yersinia pestis.